A 231-amino-acid polypeptide reads, in one-letter code: MSVTLALPSKGRLKEQTLAVLDKAGYKVILPDDSRNYRARVEGETDLDILFLSASEIARELGYGSVDLGVTGEDLVRETLAHSEERVAIEAELGFGHADVVVAVPEVWRDVTSMADLDDVAADFRQRHGRRLRIATKYWRLTQQFFSQKHGIQVYRIVESLGATEGAPAAGSADMIVDITSTGSTLRANRLKVLEDGVILRSQACLVSARRARENARVTEVATRIRKGLGG.

Belongs to the ATP phosphoribosyltransferase family. Short subfamily. As to quaternary structure, heteromultimer composed of HisG and HisZ subunits.

It localises to the cytoplasm. The catalysed reaction is 1-(5-phospho-beta-D-ribosyl)-ATP + diphosphate = 5-phospho-alpha-D-ribose 1-diphosphate + ATP. The protein operates within amino-acid biosynthesis; L-histidine biosynthesis; L-histidine from 5-phospho-alpha-D-ribose 1-diphosphate: step 1/9. In terms of biological role, catalyzes the condensation of ATP and 5-phosphoribose 1-diphosphate to form N'-(5'-phosphoribosyl)-ATP (PR-ATP). Has a crucial role in the pathway because the rate of histidine biosynthesis seems to be controlled primarily by regulation of HisG enzymatic activity. The polypeptide is ATP phosphoribosyltransferase (Brucella anthropi (strain ATCC 49188 / DSM 6882 / CCUG 24695 / JCM 21032 / LMG 3331 / NBRC 15819 / NCTC 12168 / Alc 37) (Ochrobactrum anthropi)).